The chain runs to 287 residues: ATP synthase gamma chain (287 aa).

The protein belongs to the ATPase gamma chain family. As to quaternary structure, F-type ATPases have 2 components, CF(1) - the catalytic core - and CF(0) - the membrane proton channel. CF(1) has five subunits: alpha(3), beta(3), gamma(1), delta(1), epsilon(1). CF(0) has three main subunits: a, b and c.

Its subcellular location is the cell inner membrane. Functionally, produces ATP from ADP in the presence of a proton gradient across the membrane. The gamma chain is believed to be important in regulating ATPase activity and the flow of protons through the CF(0) complex. The polypeptide is ATP synthase gamma chain (Xanthomonas campestris pv. campestris (strain B100)).